The following is a 211-amino-acid chain: Uridine kinase (211 aa).

12-19 lines the ATP pocket; that stretch reads GGSGSGKT.

The protein belongs to the uridine kinase family.

It localises to the cytoplasm. It carries out the reaction uridine + ATP = UMP + ADP + H(+). It catalyses the reaction cytidine + ATP = CMP + ADP + H(+). It participates in pyrimidine metabolism; CTP biosynthesis via salvage pathway; CTP from cytidine: step 1/3. It functions in the pathway pyrimidine metabolism; UMP biosynthesis via salvage pathway; UMP from uridine: step 1/1. This Anoxybacillus flavithermus (strain DSM 21510 / WK1) protein is Uridine kinase.